Consider the following 193-residue polypeptide: Shikimate kinase (193 aa).

Residue 31–36 (GVGKTT) participates in ATP binding. Threonine 35 lines the Mg(2+) pocket. Residues aspartate 53, arginine 77, and glycine 103 each contribute to the substrate site. Arginine 141 contacts ATP. Arginine 160 contributes to the substrate binding site. Position 176 (glutamine 176) interacts with ATP.

The protein belongs to the shikimate kinase family. In terms of assembly, monomer. Requires Mg(2+) as cofactor.

It is found in the cytoplasm. The enzyme catalyses shikimate + ATP = 3-phosphoshikimate + ADP + H(+). The protein operates within metabolic intermediate biosynthesis; chorismate biosynthesis; chorismate from D-erythrose 4-phosphate and phosphoenolpyruvate: step 5/7. Functionally, catalyzes the specific phosphorylation of the 3-hydroxyl group of shikimic acid using ATP as a cosubstrate. The sequence is that of Shikimate kinase from Novosphingobium aromaticivorans (strain ATCC 700278 / DSM 12444 / CCUG 56034 / CIP 105152 / NBRC 16084 / F199).